A 279-amino-acid polypeptide reads, in one-letter code: Urease accessory protein UreD (279 aa).

This sequence belongs to the UreD family. As to quaternary structure, ureD, UreF and UreG form a complex that acts as a GTP-hydrolysis-dependent molecular chaperone, activating the urease apoprotein by helping to assemble the nickel containing metallocenter of UreC. The UreE protein probably delivers the nickel.

It is found in the cytoplasm. In terms of biological role, required for maturation of urease via the functional incorporation of the urease nickel metallocenter. This chain is Urease accessory protein UreD, found in Rhodopseudomonas palustris (strain ATCC BAA-98 / CGA009).